A 119-amino-acid chain; its full sequence is UPF0102 protein Nther_1376 (119 aa).

The protein belongs to the UPF0102 family.

The chain is UPF0102 protein Nther_1376 from Natranaerobius thermophilus (strain ATCC BAA-1301 / DSM 18059 / JW/NM-WN-LF).